Consider the following 286-residue polypeptide: 2-hydroxy-6-oxo-6-phenylhexa-2,4-dienoate hydrolase (286 aa).

An AB hydrolase-1 domain is found at Val36–His271. Substrate-binding positions include Gly42 to Gly43, Asn51, Asn111, Ser180, and Arg190. His265 (proton acceptor) is an active-site residue. Position 266 (Trp266) interacts with substrate.

Belongs to the AB hydrolase superfamily. BphD family. In terms of assembly, homodimer.

The catalysed reaction is 2,6-dioxo-6-phenylhexa-3-enoate + H2O = 2-oxopent-4-enoate + benzoate + H(+). Its pathway is xenobiotic degradation; biphenyl degradation; 2-hydroxy-2,4-pentadienoate and benzoate from biphenyl: step 4/4. In terms of biological role, catalyzes an unusual C-C bond hydrolysis of 2-hydroxy-6-oxo-6-phenylhexa-2,4-dienoic acid (HOPDA) to produce benzoic acid and 2-hydroxy-2,4-pentadienoic acid (HPD). This Metapseudomonas furukawaii (Pseudomonas furukawaii) protein is 2-hydroxy-6-oxo-6-phenylhexa-2,4-dienoate hydrolase (bphD).